The primary structure comprises 136 residues: Group 1 truncated hemoglobin GlbN (136 aa).

Residue His81 coordinates heme.

The protein belongs to the truncated hemoglobin family. Group I subfamily. As to quaternary structure, homodimer. Heme serves as cofactor.

In terms of biological role, binds oxygen cooperatively with very high affinity (P(50) = 0.013 mmHg at 20 degrees Celsius) because of a fast combination (25 microM(-1)sec(-1)) and a slow dissociation (0.2 sec(-1)) rate. The sequence is that of Group 1 truncated hemoglobin GlbN (glbN) from Mycobacterium bovis (strain ATCC BAA-935 / AF2122/97).